Here is a 424-residue protein sequence, read N- to C-terminus: Protein ImpB (424 aa).

In terms of domain architecture, UmuC spans Phe-2–Gly-189.

This sequence belongs to the DNA polymerase type-Y family.

Functionally, involved in UV protection and mutation. The chain is Protein ImpB (impB) from Salmonella typhimurium.